The sequence spans 1300 residues: Insulin receptor-related protein (1300 aa).

The first 26 residues, 1–26 (MARPKLWPWGILLLVSLLSAGFNLDT), serve as a signal peptide directing secretion. Asparagine 47 is a glycosylation site (N-linked (GlcNAc...) asparagine). 9 disulfides stabilise this stretch: cysteine 214–cysteine 222, cysteine 216–cysteine 228, cysteine 229–cysteine 237, cysteine 233–cysteine 246, cysteine 249–cysteine 258, cysteine 262–cysteine 274, cysteine 280–cysteine 300, cysteine 304–cysteine 317, and cysteine 320–cysteine 324. N-linked (GlcNAc...) asparagine glycosylation is present at asparagine 311. N-linked (GlcNAc...) asparagine glycosylation is found at asparagine 411, asparagine 492, asparagine 528, asparagine 616, asparagine 634, asparagine 756, asparagine 885, and asparagine 898. 2 Fibronectin type-III domains span residues 483-603 (QTRT…TLPA) and 607-707 (VPQD…AQEA). Cysteine 657 and cysteine 864 are oxidised to a cystine. The tract at residues 740–762 (DAGRHRRAIGSPRPGGNSSDFEI) is disordered. Over 747–921 (AIGSPRPGGN…PEEEDSGGLH (175 aa)) the chain is Extracellular. In terms of domain architecture, Fibronectin type-III 3 spans 818–912 (IPGKLSWEAA…DSVAFYIPGP (95 aa)). Residues 922-943 (ILLTVTPAGLMLLIILAALGFF) traverse the membrane as a helical segment. The Cytoplasmic segment spans residues 944 to 1300 (YSRKRNGTLY…CSLQNGGPEH (357 aa)). The 276-residue stretch at 979–1254 (ISIIRELGQG…SIQKELRPSF (276 aa)) folds into the Protein kinase domain. Residues 985–993 (LGQGSFGMV) and lysine 1013 each bind ATP. Aspartate 1115 acts as the Proton acceptor in catalysis. Residues tyrosine 1145 and tyrosine 1146 each carry the phosphotyrosine; by autocatalysis modification. The disordered stretch occupies residues 1270-1300 (GLQPTTDAESSSPPTSKGASDCSLQNGGPEH). The span at 1272–1300 (QPTTDAESSSPPTSKGASDCSLQNGGPEH) shows a compositional bias: polar residues.

This sequence belongs to the protein kinase superfamily. Tyr protein kinase family. Insulin receptor subfamily. In terms of assembly, probable tetramer of 2 alpha and 2 beta chains linked by disulfide bonds. The alpha chains contribute to the formation of the ligand-binding domain, while the beta chains carry the kinase domain. In terms of processing, autophosphorylated on tyrosine residues between pH 7.9 and pH 10.5.

The protein localises to the membrane. It carries out the reaction L-tyrosyl-[protein] + ATP = O-phospho-L-tyrosyl-[protein] + ADP + H(+). Functionally, receptor with tyrosine-protein kinase activity. Functions as a pH sensing receptor which is activated by increased extracellular pH. Activates an intracellular signaling pathway that involves IRS1 and AKT1/PKB. This Cavia porcellus (Guinea pig) protein is Insulin receptor-related protein (INSRR).